The chain runs to 394 residues: Phosphoglycerate kinase (394 aa).

Substrate-binding positions include Asp-21–Asn-23, His-59–Arg-62, Arg-117, and Arg-150. ATP-binding positions include Lys-201, Glu-318, and Gly-344–Thr-347.

This sequence belongs to the phosphoglycerate kinase family. In terms of assembly, monomer.

The protein localises to the cytoplasm. The catalysed reaction is (2R)-3-phosphoglycerate + ATP = (2R)-3-phospho-glyceroyl phosphate + ADP. It participates in carbohydrate degradation; glycolysis; pyruvate from D-glyceraldehyde 3-phosphate: step 2/5. This chain is Phosphoglycerate kinase, found in Blochmanniella pennsylvanica (strain BPEN).